The chain runs to 381 residues: tRNA pseudouridine synthase D (381 aa).

Asp81 serves as the catalytic Nucleophile. One can recognise a TRUD domain in the interval Gly160 to Val335.

The protein belongs to the pseudouridine synthase TruD family.

It catalyses the reaction uridine(13) in tRNA = pseudouridine(13) in tRNA. Functionally, responsible for synthesis of pseudouridine from uracil-13 in transfer RNAs. The protein is tRNA pseudouridine synthase D of Helicobacter acinonychis (strain Sheeba).